The primary structure comprises 212 residues: Probable GTP-binding protein EngB (212 aa).

One can recognise an EngB-type G domain in the interval A38–L210. GTP contacts are provided by residues G46 to S53, G73 to Q77, D91 to G94, T158 to D161, and V189 to S191. Mg(2+) contacts are provided by S53 and T75.

This sequence belongs to the TRAFAC class TrmE-Era-EngA-EngB-Septin-like GTPase superfamily. EngB GTPase family. Mg(2+) serves as cofactor.

Its function is as follows. Necessary for normal cell division and for the maintenance of normal septation. This Rickettsia bellii (strain OSU 85-389) protein is Probable GTP-binding protein EngB.